The primary structure comprises 300 residues: Regulatory protein NocR (300 aa).

The HTH lysR-type domain maps to 1–59 (MIQSRQLEAFRAVMLTGGMTSAANLVRITQPAISRLIRDLEEEIGISLFERTGNRLRPT). Residues 19–38 (MTSAANLVRITQPAISRLIR) constitute a DNA-binding region (H-T-H motif).

Belongs to the LysR transcriptional regulatory family.

Positive regulatory protein for the noc operon involved in nopaline catabolism and uptake. This chain is Regulatory protein NocR (nocR), found in Agrobacterium fabrum (strain C58 / ATCC 33970) (Agrobacterium tumefaciens (strain C58)).